Reading from the N-terminus, the 150-residue chain is D-aminoacyl-tRNA deacylase (150 aa).

The short motif at 137–138 (GP) is the Gly-cisPro motif, important for rejection of L-amino acids element.

It belongs to the DTD family. Homodimer.

The protein resides in the cytoplasm. It carries out the reaction glycyl-tRNA(Ala) + H2O = tRNA(Ala) + glycine + H(+). The catalysed reaction is a D-aminoacyl-tRNA + H2O = a tRNA + a D-alpha-amino acid + H(+). Its function is as follows. An aminoacyl-tRNA editing enzyme that deacylates mischarged D-aminoacyl-tRNAs. Also deacylates mischarged glycyl-tRNA(Ala), protecting cells against glycine mischarging by AlaRS. Acts via tRNA-based rather than protein-based catalysis; rejects L-amino acids rather than detecting D-amino acids in the active site. By recycling D-aminoacyl-tRNA to D-amino acids and free tRNA molecules, this enzyme counteracts the toxicity associated with the formation of D-aminoacyl-tRNA entities in vivo and helps enforce protein L-homochirality. The sequence is that of D-aminoacyl-tRNA deacylase from Alkalilimnicola ehrlichii (strain ATCC BAA-1101 / DSM 17681 / MLHE-1).